Reading from the N-terminus, the 101-residue chain is NADH-quinone oxidoreductase subunit K (101 aa).

3 consecutive transmembrane segments (helical) span residues 5–25 (LGQV…GVLL), 29–49 (LIMI…VLVG), and 62–82 (VALL…ALVV).

Belongs to the complex I subunit 4L family. NDH-1 is composed of 14 different subunits. Subunits NuoA, H, J, K, L, M, N constitute the membrane sector of the complex.

The protein localises to the cell inner membrane. It carries out the reaction a quinone + NADH + 5 H(+)(in) = a quinol + NAD(+) + 4 H(+)(out). Its function is as follows. NDH-1 shuttles electrons from NADH, via FMN and iron-sulfur (Fe-S) centers, to quinones in the respiratory chain. The immediate electron acceptor for the enzyme in this species is believed to be ubiquinone. Couples the redox reaction to proton translocation (for every two electrons transferred, four hydrogen ions are translocated across the cytoplasmic membrane), and thus conserves the redox energy in a proton gradient. This chain is NADH-quinone oxidoreductase subunit K, found in Syntrophotalea carbinolica (strain DSM 2380 / NBRC 103641 / GraBd1) (Pelobacter carbinolicus).